Consider the following 570-residue polypeptide: Structure-specific endonuclease subunit EME1 (570 aa).

Over residues 1 to 12 (MALKKSSPSLDS) the composition is skewed to low complexity. The segment at 1-42 (MALKKSSPSLDSGDSDSEELPTFAFLKKEPSSTKRRQPEREE) is disordered. Phosphoserine is present on residues S12 and S15. Over residues 26–42 (LKKEPSSTKRRQPEREE) the composition is skewed to basic and acidic residues. Phosphoserine is present on residues S84, S85, and S87. K103 participates in a covalent cross-link: Glycyl lysine isopeptide (Lys-Gly) (interchain with G-Cter in SUMO2). Phosphoserine occurs at positions 111 and 117. Glycyl lysine isopeptide (Lys-Gly) (interchain with G-Cter in SUMO2) cross-links involve residues K136 and K141. T150 bears the Phosphothreonine mark. Disordered stretches follow at residues 187–233 (KTNS…ERKN) and 372–400 (AQNP…ASIG). A compositionally biased stretch (basic and acidic residues) spans 220–233 (RQKESTLRRQERKN). A nuclease-like domain; forms the post-nick DNA binding interface and is involved in DNA recognition and bending region spans residues 250 to 456 (KHIIVVLDPV…PFKKLRDETT (207 aa)). Positions 476-570 (RGLALVWRRQ…QPHLSLDSAD (95 aa)) are helix-hairpin-helix (2HhH); forms the pre-nick DNA binding interface and is involved in DNA recognition and bending.

This sequence belongs to the EME1/MMS4 family. In terms of assembly, part of the heterodimeric MUS81-EME1 complex.

Its subcellular location is the nucleus. The protein localises to the nucleolus. In terms of biological role, non-catalytic subunit of the structure-specific, heterodimeric DNA endonuclease MUS81-EME1 which is involved in the maintenance of genome stability. In the complex, EME1 is required for DNA cleavage, participating in DNA recognition and bending. MUS81-EME1 cleaves 3'-flaps and nicked Holliday junctions, and exhibit limited endonuclease activity with 5' flaps and nicked double-stranded DNAs. Active during prometaphase, MUS81-EME1 resolves mitotic recombination intermediates, including Holliday junctions, which form during homologous recombination. The sequence is that of Structure-specific endonuclease subunit EME1 from Homo sapiens (Human).